A 245-amino-acid chain; its full sequence is Ribonuclease 3 (245 aa).

Residues Phe-19–Gly-148 enclose the RNase III domain. Position 61 (Glu-61) interacts with Mg(2+). Residue Asp-65 is part of the active site. Residues Asp-134 and Glu-137 each coordinate Mg(2+). Glu-137 is an active-site residue. Positions Asp-174 to Glu-243 constitute a DRBM domain.

The protein belongs to the ribonuclease III family. In terms of assembly, homodimer. The cofactor is Mg(2+).

It localises to the cytoplasm. The catalysed reaction is Endonucleolytic cleavage to 5'-phosphomonoester.. Functionally, digests double-stranded RNA. Involved in the processing of primary rRNA transcript to yield the immediate precursors to the large and small rRNAs (23S and 16S). Processes some mRNAs, and tRNAs when they are encoded in the rRNA operon. Processes pre-crRNA and tracrRNA of type II CRISPR loci if present in the organism. In Bacillus cereus (strain ZK / E33L), this protein is Ribonuclease 3.